The sequence spans 436 residues: Cyclin-dependent kinase 11B (436 aa).

Residues 25–30 carry the Nuclear localization signal motif; sequence VKKNRK. Positions 30–44 are calmodulin-binding; sequence KKLVKGLHRAGPPPE. Residues 79-364 enclose the Protein kinase domain; that stretch reads FQCLNRIEEG…AEDGLKHEYF (286 aa). ATP contacts are provided by residues 85-93 and lysine 108; that span reads IEEGTYGVV. Serine 123 carries the phosphoserine; by CDK7 modification. Residue threonine 129 is modified to Phosphothreonine; by CDK7. Aspartate 203 (proton acceptor) is an active-site residue. Residue serine 230 is modified to Phosphoserine. Phosphotyrosine is present on tyrosine 235. Threonine 236 carries the post-translational modification Phosphothreonine. Lysine 282 participates in a covalent cross-link: Glycyl lysine isopeptide (Lys-Gly) (interchain with G-Cter in SUMO2). Positions 383 to 406 are disordered; that stretch reads SEQQCVKRGTSPKPPEGGLGYSQL. Threonine 392 is subject to Phosphothreonine. Serine 393 carries the phosphoserine modification.

This sequence belongs to the protein kinase superfamily. CMGC Ser/Thr protein kinase family. CDC2/CDKX subfamily. In terms of assembly, may interact PAK1 and RANBP9. p110C interacts with RNPS1. Interacts with CCND3. Interacts with CCNL1 and CCNL2. Forms complexes with pre-mRNA-splicing factors, including at least SRSF1, SRSF2 AND SRSF7/SLU7. Requires Mg(2+) as cofactor.

The protein resides in the cytoplasm. It localises to the nucleus membrane. Its subcellular location is the endomembrane system. The protein localises to the perinuclear region. The enzyme catalyses L-seryl-[protein] + ATP = O-phospho-L-seryl-[protein] + ADP + H(+). It carries out the reaction L-threonyl-[protein] + ATP = O-phospho-L-threonyl-[protein] + ADP + H(+). Its function is as follows. Plays multiple roles in cell cycle progression, cytokinesis and apoptosis. Involved in pre-mRNA splicing in a kinase activity-dependent manner. May act as a negative regulator of normal cell cycle progression. This chain is Cyclin-dependent kinase 11B (Cdk11b), found in Rattus norvegicus (Rat).